A 77-amino-acid polypeptide reads, in one-letter code: Sec-independent protein translocase protein TatA (77 aa).

The helical transmembrane segment at 3 to 23 threads the bilayer; that stretch reads VFGIGLPELIVILVVALLIFG. The interval 56 to 77 is disordered; sequence TAALEEEQQAKAEAESPREISP. Residues 63 to 77 are compositionally biased toward basic and acidic residues; that stretch reads QQAKAEAESPREISP.

The protein belongs to the TatA/E family. Forms a complex with TatC.

Its subcellular location is the cell inner membrane. In terms of biological role, part of the twin-arginine translocation (Tat) system that transports large folded proteins containing a characteristic twin-arginine motif in their signal peptide across membranes. TatA could form the protein-conducting channel of the Tat system. This is Sec-independent protein translocase protein TatA from Thermosynechococcus vestitus (strain NIES-2133 / IAM M-273 / BP-1).